We begin with the raw amino-acid sequence, 283 residues long: Pantothenate synthetase (283 aa).

30–37 (MGNLHDGH) provides a ligand contact to ATP. The Proton donor role is filled by His37. Gln61 is a (R)-pantoate binding site. Gln61 provides a ligand contact to beta-alanine. Residue 149-152 (GEKD) participates in ATP binding. Gln155 contributes to the (R)-pantoate binding site. 186–189 (LSSR) is an ATP binding site.

Belongs to the pantothenate synthetase family. Homodimer.

The protein localises to the cytoplasm. The catalysed reaction is (R)-pantoate + beta-alanine + ATP = (R)-pantothenate + AMP + diphosphate + H(+). Its pathway is cofactor biosynthesis; (R)-pantothenate biosynthesis; (R)-pantothenate from (R)-pantoate and beta-alanine: step 1/1. Catalyzes the condensation of pantoate with beta-alanine in an ATP-dependent reaction via a pantoyl-adenylate intermediate. This is Pantothenate synthetase from Escherichia coli (strain SMS-3-5 / SECEC).